Reading from the N-terminus, the 177-residue chain is Interleukin-7 (177 aa).

The first 25 residues, 1–25, serve as a signal peptide directing secretion; it reads MFHVSFRYIFGLPPLILVLLPVASS. 3 disulfide bridges follow: Cys27–Cys166, Cys59–Cys154, and Cys72–Cys117. Residues Asn95, Asn116, and Asn141 are each glycosylated (N-linked (GlcNAc...) asparagine).

This sequence belongs to the IL-7/IL-9 family. In terms of assembly, interacts with IL7R and CSF2RG.

Its subcellular location is the secreted. Hematopoietic cytokine that plays an essential role in the development, expansion, and survival of naive and memory T-cells and B-cells thereby regulating the number of mature lymphocytes and maintaining lymphoid homeostasis. Mechanistically, exerts its biological effects through a receptor composed of IL7RA subunit and the cytokine receptor common subunit gamma/CSF2RG. Binding to the receptor leads to activation of various kinases including JAK1 or JAK3 depending on the cell type and subsequently propagation of signals through activation of several downstream signaling pathways including the PI3K/Akt/mTOR or the JAK-STAT5. This chain is Interleukin-7 (IL7), found in Homo sapiens (Human).